The primary structure comprises 255 residues: MAVGKNKRLSKGKKGLKKRAQDPFSRKDEYLVKAPSTFATRDVGKTIVNRTVGLKNANDSLKGRIFEVSLADLQNDQAHSFRKIKLRVDEVQGKNCLTNFHGMDFTSDKLRSLVRKWQSLIEANVTVKTTDDYLVRLFAIAFTKRRSFQVKKTTYARSSQIRAIRKKMVEIIQREASTRTLTQLTKLVPEVIGREIEKATRGIYPLQNVHIRKVKLLKQPKFDIGALLALHGESSTDDKGQKVEREFKEQVLESV.

Residues 1 to 18 (MAVGKNKRLSKGKKGLKK) are compositionally biased toward basic residues. The disordered stretch occupies residues 1–22 (MAVGKNKRLSKGKKGLKKRAQD). Position 2 is an N-acetylalanine; partial (Ala2).

This sequence belongs to the eukaryotic ribosomal protein eS1 family. In terms of assembly, component of the small ribosomal subunit. Mature ribosomes consist of a small (40S) and a large (60S) subunit. The 40S subunit contains about 33 different proteins and 1 molecule of RNA (18S). The 60S subunit contains about 49 different proteins and 3 molecules of RNA (25S, 5.8S and 5S).

It localises to the cytoplasm. This chain is Small ribosomal subunit protein eS1, found in Uncinocarpus reesii (strain UAMH 1704).